The primary structure comprises 181 residues: Oligoribonuclease (181 aa).

Positions 8 to 171 (LIWIDLEMTG…QDIQESIAEL (164 aa)) constitute an Exonuclease domain. The active site involves tyrosine 129.

It belongs to the oligoribonuclease family.

Its subcellular location is the cytoplasm. Its function is as follows. 3'-to-5' exoribonuclease specific for small oligoribonucleotides. The chain is Oligoribonuclease from Shewanella baltica (strain OS155 / ATCC BAA-1091).